The chain runs to 66 residues: MPKLKTKSSVKKRFSVTATGKIKSTQSAKRHGMTKRSKRSIRVQRGTAIMNPSDSRIVKLFMPYSR.

A disordered region spans residues 21–40 (KIKSTQSAKRHGMTKRSKRS). Basic residues predominate over residues 28 to 40 (AKRHGMTKRSKRS).

It belongs to the bacterial ribosomal protein bL35 family.

The sequence is that of Large ribosomal subunit protein bL35 from Ehrlichia canis (strain Jake).